The chain runs to 839 residues: Autophagy-related protein 9A (839 aa).

A disordered region spans residues 1–20 (MAQFDTEYQRLEASYSDSPP). N-acetylalanine is present on A2. The Cytoplasmic segment spans residues 2–61 (AQFDTEYQRLEASYSDSPPGEEDLLVHVAEGSKSPWHHIENLDLFFSRVYNLHQKNGFTC). The Tyrosine-based sorting signal signature appears at 8–11 (YQRL). Phosphoserine occurs at positions 14, 16, and 18. A helical membrane pass occupies residues 62 to 84 (MLIGEIFELMQFLFVVAFTTFLV). Topologically, residues 85 to 128 (SCVDYDILFANKMVNHSLHPTEPVKVTLPDAFLPAQVCSARIQE) are lumenal. N99 carries N-linked (GlcNAc...) asparagine glycosylation. The helical transmembrane segment at 129–154 (NGSLITILVIAGVFWIHRLIKFIYNI) threads the bilayer. The Cytoplasmic portion of the chain corresponds to 155–290 (CCYWEIHSFY…ELAQRLSNRI (136 aa)). The stretch at 291–301 (LWIGIANFLLC) is an intramembrane region. Over 302–319 (PLILIWQILYAFFSYAEV) the chain is Cytoplasmic. The stretch at 320 to 328 (LKREPGALG) is an intramembrane region. The Cytoplasmic segment spans residues 329–371 (ARCWSLYGRCYLRHFNELEHELQSRLNRGYKPASKYMNCFLSP). Residues 372-397 (LLTLLAKNGAFFAGSILAVLIALTIY) form a helical membrane-spanning segment. Topologically, residues 398–406 (DEDVLAVEH) are lumenal. The chain crosses the membrane as a helical span at residues 407–424 (VLTTVTLLGVTVTVCRSF). The Cytoplasmic portion of the chain corresponds to 425–470 (IPDQHMVFCPEQLLRVILAHIHYMPDHWQGNAHRSQTRDEFAQLFQ). The stretch at 471–480 (YKAVFILEEL) is an intramembrane region. Topologically, residues 481–483 (LSP) are cytoplasmic. An intramembrane segment occupies 484–492 (IVTPLILIF). The Cytoplasmic segment spans residues 493–839 (CLRPRALEII…DELPPQVHKV (347 aa)). Residues S656, S735, S738, S741, and S828 each carry the phosphoserine modification. Disordered stretches follow at residues 656 to 686 (SPLQPGQAPTGRAHSTMTGSGVDARTASSGS) and 719 to 839 (QQAQ…VHKV). Over residues 724–736 (EPERHLWHRRESD) the composition is skewed to basic and acidic residues. Acidic residues-rich tracts occupy residues 737-747 (ESGESAPDEGG) and 823-832 (VPEEGSEDEL).

This sequence belongs to the ATG9 family. As to quaternary structure, homotrimer; forms a homotrimer with a central pore that forms a path between the two membrane leaflets. Interacts (via cytoplasmic its C-terminus) with ATG2A. Interacts with SUPT20H. Interacts (via the tyrosine-based sorting signal motif) with AP4M1; promoting association with the AP-4 complex. Interacts with ARFIP1 and ARFIP2. Interacts with PI4K2A and PI4KB. Interacts with ATG4A; the interaction is direct and promotes ATG9A trafficking. In terms of processing, ufmylated in a DDRGK1 dependent manner.

Its subcellular location is the preautophagosomal structure membrane. The protein resides in the cytoplasmic vesicle. The protein localises to the autophagosome membrane. It is found in the golgi apparatus. It localises to the trans-Golgi network membrane. Its subcellular location is the late endosome membrane. The protein resides in the recycling endosome membrane. The protein localises to the endoplasmic reticulum membrane. It is found in the mitochondrion membrane. It carries out the reaction a 1,2-diacyl-sn-glycero-3-phosphocholine(in) = a 1,2-diacyl-sn-glycero-3-phosphocholine(out). The enzyme catalyses a 1,2-diacyl-sn-glycero-3-phospho-L-serine(in) = a 1,2-diacyl-sn-glycero-3-phospho-L-serine(out). It catalyses the reaction a 1,2-diacyl-sn-glycero-3-phosphoethanolamine(in) = a 1,2-diacyl-sn-glycero-3-phosphoethanolamine(out). Its function is as follows. Phospholipid scramblase involved in autophagy by mediating autophagosomal membrane expansion. Cycles between the preautophagosomal structure/phagophore assembly site (PAS) and the cytoplasmic vesicle pool and supplies membrane for the growing autophagosome. Lipid scramblase activity plays a key role in preautophagosomal structure/phagophore assembly by distributing the phospholipids that arrive through ATG2 (ATG2A or ATG2B) from the cytoplasmic to the luminal leaflet of the bilayer, thereby driving autophagosomal membrane expansion. Also required to supply phosphatidylinositol 4-phosphate to the autophagosome initiation site by recruiting the phosphatidylinositol 4-kinase beta (PI4KB) in a process dependent on ARFIP2, but not ARFIP1. In addition to autophagy, also plays a role in necrotic cell death. In Pongo abelii (Sumatran orangutan), this protein is Autophagy-related protein 9A.